Reading from the N-terminus, the 299-residue chain is ATP phosphoribosyltransferase (299 aa).

This sequence belongs to the ATP phosphoribosyltransferase family. Long subfamily. It depends on Mg(2+) as a cofactor.

The protein resides in the cytoplasm. It catalyses the reaction 1-(5-phospho-beta-D-ribosyl)-ATP + diphosphate = 5-phospho-alpha-D-ribose 1-diphosphate + ATP. It functions in the pathway amino-acid biosynthesis; L-histidine biosynthesis; L-histidine from 5-phospho-alpha-D-ribose 1-diphosphate: step 1/9. With respect to regulation, feedback inhibited by histidine. Functionally, catalyzes the condensation of ATP and 5-phosphoribose 1-diphosphate to form N'-(5'-phosphoribosyl)-ATP (PR-ATP). Has a crucial role in the pathway because the rate of histidine biosynthesis seems to be controlled primarily by regulation of HisG enzymatic activity. This is ATP phosphoribosyltransferase from Baumannia cicadellinicola subsp. Homalodisca coagulata.